A 123-amino-acid polypeptide reads, in one-letter code: Large ribosomal subunit protein uL24 (123 aa).

It belongs to the universal ribosomal protein uL24 family. As to quaternary structure, part of the 50S ribosomal subunit.

In terms of biological role, one of two assembly initiator proteins, it binds directly to the 5'-end of the 23S rRNA, where it nucleates assembly of the 50S subunit. Located at the polypeptide exit tunnel on the outside of the subunit. In Pyrobaculum islandicum (strain DSM 4184 / JCM 9189 / GEO3), this protein is Large ribosomal subunit protein uL24.